The following is a 255-amino-acid chain: 5-oxoprolinase subunit A (255 aa).

Belongs to the LamB/PxpA family. In terms of assembly, forms a complex composed of PxpA, PxpB and PxpC.

It catalyses the reaction 5-oxo-L-proline + ATP + 2 H2O = L-glutamate + ADP + phosphate + H(+). Catalyzes the cleavage of 5-oxoproline to form L-glutamate coupled to the hydrolysis of ATP to ADP and inorganic phosphate. The chain is 5-oxoprolinase subunit A from Nitrobacter hamburgensis (strain DSM 10229 / NCIMB 13809 / X14).